A 559-amino-acid chain; its full sequence is Nuclear speckle splicing regulatory protein 1 (559 aa).

The segment at 22-57 is disordered; it reads VLQKPSVFGNDSDDDDDETSVSESLQREAAKKQAMK. Residues serine 27 and serine 33 each carry the phosphoserine modification. The span at 32-41 shows a compositional bias: acidic residues; the sequence is DSDDDDDETS. Residues 105–179 adopt a coiled-coil conformation; the sequence is IHNLLKAVEI…EARLDVTKQR (75 aa). A necessary for alternative splicing activity region spans residues 107 to 171; that stretch reads NLLKAVEIRK…RERRAAALEA (65 aa). The segment at 195 to 534 is disordered; the sequence is EEEVPTCSFR…AKRSNEETVT (340 aa). The segment covering 204-219 has biased composition (basic and acidic residues); sequence REARSEIKEEKSKGYS. Lysine 211 is covalently cross-linked (Glycyl lysine isopeptide (Lys-Gly) (interchain with G-Cter in SUMO2)). Serine 249, serine 255, and serine 256 each carry phosphoserine. Basic and acidic residues predominate over residues 251-274; that stretch reads FDAKSSENDEMEGDKGNCRREKGT. Position 276 is a phosphothreonine (threonine 276). A Glycyl lysine isopeptide (Lys-Gly) (interchain with G-Cter in SUMO2) cross-link involves residue lysine 282. Basic and acidic residues-rich tracts occupy residues 314 to 343, 351 to 488, and 502 to 521; these read EKREDEHQERPAREQDSYHTDRDSRKEKRD, SHRD…RNPE, and RITEECQETGKEQERLHETV. The stretch at 379–428 forms a coiled coil; the sequence is KREKDREKYPSREQERHRQRNNYDRHNEKGCEKEEKSKEKEEHVKARKER. Serine 458 bears the Phosphoserine mark.

Belongs to the NSRP1 family. As to quaternary structure, interacts (via C-terminus) with SRSF1. Interacts (via C-terminus) with SRSF2.

Its subcellular location is the nucleus. The protein localises to the nucleus speckle. Its function is as follows. RNA-binding protein that mediates pre-mRNA alternative splicing regulation. The protein is Nuclear speckle splicing regulatory protein 1 (NSRP1) of Bos taurus (Bovine).